A 438-amino-acid polypeptide reads, in one-letter code: Xylose isomerase (438 aa).

Catalysis depends on residues H100 and D103. Positions 231, 267, 270, 295, 306, 308, and 338 each coordinate Mg(2+).

Belongs to the xylose isomerase family. In terms of assembly, homotetramer. Mg(2+) serves as cofactor.

The protein resides in the cytoplasm. It catalyses the reaction alpha-D-xylose = alpha-D-xylulofuranose. In Pseudomonas savastanoi pv. phaseolicola (strain 1448A / Race 6) (Pseudomonas syringae pv. phaseolicola (strain 1448A / Race 6)), this protein is Xylose isomerase.